The following is a 185-amino-acid chain: Elongation factor P (185 aa).

This sequence belongs to the elongation factor P family.

The protein localises to the cytoplasm. The protein operates within protein biosynthesis; polypeptide chain elongation. Involved in peptide bond synthesis. Stimulates efficient translation and peptide-bond synthesis on native or reconstituted 70S ribosomes in vitro. Probably functions indirectly by altering the affinity of the ribosome for aminoacyl-tRNA, thus increasing their reactivity as acceptors for peptidyl transferase. The sequence is that of Elongation factor P from Oceanobacillus iheyensis (strain DSM 14371 / CIP 107618 / JCM 11309 / KCTC 3954 / HTE831).